Consider the following 42-residue polypeptide: Photosystem I reaction center subunit IX (42 aa).

Residues 7-27 (YLSTAPVLSALWFAILAGLLI) form a helical membrane-spanning segment.

It belongs to the PsaJ family.

Its subcellular location is the plastid. It localises to the chloroplast thylakoid membrane. May help in the organization of the PsaE and PsaF subunits. In Chlorokybus atmophyticus (Soil alga), this protein is Photosystem I reaction center subunit IX.